Here is a 253-residue protein sequence, read N- to C-terminus: Triosephosphate isomerase (253 aa).

9 to 11 is a binding site for substrate; the sequence is NWK. The active-site Electrophile is the histidine 95. The active-site Proton acceptor is glutamate 167. Substrate is bound by residues glycine 173, serine 213, and 234 to 235; that span reads GG. Position 213 is a phosphoserine (serine 213).

It belongs to the triosephosphate isomerase family. Homodimer.

The protein resides in the cytoplasm. It carries out the reaction D-glyceraldehyde 3-phosphate = dihydroxyacetone phosphate. It functions in the pathway carbohydrate biosynthesis; gluconeogenesis. It participates in carbohydrate degradation; glycolysis; D-glyceraldehyde 3-phosphate from glycerone phosphate: step 1/1. Involved in the gluconeogenesis. Catalyzes stereospecifically the conversion of dihydroxyacetone phosphate (DHAP) to D-glyceraldehyde-3-phosphate (G3P). In Lysinibacillus sphaericus (strain C3-41), this protein is Triosephosphate isomerase.